Here is a 373-residue protein sequence, read N- to C-terminus: Enoyl-[acyl-carrier-protein] reductase, mitochondrial (373 aa).

The N-terminal 53 residues, 1–53, are a transit peptide targeting the mitochondrion; the sequence is MLVSQRVTGARARAPQLAGLLEAWYRHGRTTSSYSALSEPSRVRALVYGNHGD. K61 carries the N6-acetyllysine; alternate modification. K61 carries the N6-succinyllysine; alternate modification. Y94 (proton donor) is an active-site residue. NADP(+) is bound by residues N167, 193–196, and 216–218; these read NSGV and RDR. K252 and K267 each carry N6-acetyllysine; alternate. 2 positions are modified to N6-succinyllysine; alternate: K252 and K267. Residues 285–288 and 310–312 contribute to the NADP(+) site; these read YGGM and FWL. At K316 the chain carries N6-succinyllysine. Residue K368 participates in NADP(+) binding.

It belongs to the zinc-containing alcohol dehydrogenase family. Quinone oxidoreductase subfamily. In terms of assembly, homodimer. As to expression, expressed in Purkinje cells (at protein level).

It is found in the mitochondrion. It catalyses the reaction a 2,3-saturated acyl-[ACP] + NADP(+) = a (2E)-enoyl-[ACP] + NADPH + H(+). The enzyme catalyses (2E)-butenoyl-[ACP] + NADPH + H(+) = butanoyl-[ACP] + NADP(+). The catalysed reaction is (2E)-hexenoyl-[ACP] + NADPH + H(+) = hexanoyl-[ACP] + NADP(+). It carries out the reaction (2E)-octenoyl-[ACP] + NADPH + H(+) = octanoyl-[ACP] + NADP(+). It catalyses the reaction (2E)-decenoyl-[ACP] + NADPH + H(+) = decanoyl-[ACP] + NADP(+). The enzyme catalyses (2E)-dodecenoyl-[ACP] + NADPH + H(+) = dodecanoyl-[ACP] + NADP(+). The catalysed reaction is (2E)-tetradecenoyl-[ACP] + NADPH + H(+) = tetradecanoyl-[ACP] + NADP(+). It carries out the reaction (2E)-hexadecenoyl-[ACP] + NADPH + H(+) = hexadecanoyl-[ACP] + NADP(+). Catalyzes the NADPH-dependent reduction of trans-2-enoyl thioesters in mitochondrial fatty acid synthesis (fatty acid synthesis type II). Fatty acid chain elongation in mitochondria uses acyl carrier protein (ACP) as an acyl group carrier, but the enzyme accepts both ACP and CoA thioesters as substrates in vitro. Displays a preference for medium-chain over short- and long-chain substrates. May provide the octanoyl chain used for lipoic acid biosynthesis, regulating protein lipoylation and mitochondrial respiratory activity particularly in Purkinje cells. Involved in iron homeostasis; affecting Fe-S cluster assembly and ceramide metabolism. Required for proper morphology and bioenergetic functions of mitochondria. Required for maintenance of neurons. The sequence is that of Enoyl-[acyl-carrier-protein] reductase, mitochondrial (Mecr) from Mus musculus (Mouse).